Consider the following 925-residue polypeptide: Glutamate receptor 3.1 (925 aa).

The first 25 residues, 1-25, serve as a signal peptide directing secretion; it reads MLSSMNWVLLSFIIVLGGGLLLSEG. At 26–591 the chain is on the extracellular side; sequence ASSSRPPVIK…NPWAFLRPFT (566 aa). Residues asparagine 309, asparagine 341, asparagine 359, asparagine 419, asparagine 437, and asparagine 488 are each glycosylated (N-linked (GlcNAc...) asparagine). Residues 592–612 form a helical membrane-spanning segment; that stretch reads LPMWAVTASFFVIVGAAIWIL. Residues 613–621 are Cytoplasmic-facing; that stretch reads EHRINDEFR. The chain crosses the membrane as a helical span at residues 622–642; it reads GPPRRQIITILWFTFSTMFFS. The Cytoplasmic segment spans residues 643–653; that stretch reads HRETTVSTLGR. The chain crosses the membrane as a helical span at residues 654–674; it reads MVLLIWLFVVLIITSSYTASL. Over 675–831 the chain is Extracellular; the sequence is TSILTVQQLN…GDSEQLNVHS (157 aa). N-linked (GlcNAc...) asparagine glycans are attached at residues asparagine 738 and asparagine 812. A helical transmembrane segment spans residues 832 to 852; the sequence is FWGMFLVVGIACLVALFIHFF. At 853–925 the chain is on the cytoplasmic side; it reads KIIRDFCKDT…ISRTASRRPI (73 aa). The tract at residues 897–925 is disordered; that stretch reads KRRLKRKRNNDHSMNANSIISRTASRRPI. Positions 908–919 are enriched in polar residues; sequence HSMNANSIISRT.

It belongs to the glutamate-gated ion channel (TC 1.A.10.1) family. As to quaternary structure, may form heteromers. Expressed predominantly in roots. Firt detected in the vascular tissues of the cotyledons, and later in the vasculature of all organs. In leaves, preferentially expressed in guard cells.

Its subcellular location is the membrane. In terms of biological role, glutamate-gated receptor that probably acts as a non-selective cation channel. May be involved in light-signal transduction and calcium homeostasis via the regulation of calcium influx into cells. Required for the long-term calcium oscillation-regulated stomatal movements. This Arabidopsis thaliana (Mouse-ear cress) protein is Glutamate receptor 3.1 (GLR3.1).